Reading from the N-terminus, the 90-residue chain is uncharacterized protein (90 aa).

The protein belongs to the barstar family.

This is an uncharacterized protein from Escherichia coli O157:H7.